Reading from the N-terminus, the 365-residue chain is Chorismate synthase (365 aa).

The NADP(+) site is built by R48 and R54. FMN is bound by residues 129–131 (RSS), 241–242 (NA), G285, 300–304 (KPTSS), and R326.

The protein belongs to the chorismate synthase family. As to quaternary structure, homotetramer. Requires FMNH2 as cofactor.

It catalyses the reaction 5-O-(1-carboxyvinyl)-3-phosphoshikimate = chorismate + phosphate. Its pathway is metabolic intermediate biosynthesis; chorismate biosynthesis; chorismate from D-erythrose 4-phosphate and phosphoenolpyruvate: step 7/7. Catalyzes the anti-1,4-elimination of the C-3 phosphate and the C-6 proR hydrogen from 5-enolpyruvylshikimate-3-phosphate (EPSP) to yield chorismate, which is the branch point compound that serves as the starting substrate for the three terminal pathways of aromatic amino acid biosynthesis. This reaction introduces a second double bond into the aromatic ring system. The sequence is that of Chorismate synthase from Parvibaculum lavamentivorans (strain DS-1 / DSM 13023 / NCIMB 13966).